A 623-amino-acid polypeptide reads, in one-letter code: Phosphatidylinositol-3-phosphatase SAC1 (623 aa).

Residues 1–523 are Cytoplasmic-facing; sequence MTGPIVYVQN…SPFPDRRPVY (523 aa). The SAC domain maps to 115–454; that stretch reads LELHLKNSTF…ADAVSVAYSG (340 aa). Glycyl lysine isopeptide (Lys-Gly) (interchain with G-Cter in ubiquitin) cross-links involve residues Lys-246 and Lys-358. A helical membrane pass occupies residues 524 to 544; that stretch reads IQLIPMIICAALTVLGATIFF. Residues 545–552 lie on the Lumenal side of the membrane; that stretch reads PKDRFTSS. Residues 553–573 form a helical membrane-spanning segment; sequence KNLLYFAGASIVLALSTKFMF. Residues 574–623 are Cytoplasmic-facing; it reads KNGIQFVNWPKLVDVGFLVVHQTHDKEQQFKGLKYAQSPKFSKPDPLKRD.

In terms of assembly, component of the SPOTS complex, at least composed of LCB1/2 (LCB1 and/or LCB2), ORM1/2 (ORM1 and/or ORM2), SAC1 and TSC3.

The protein localises to the endoplasmic reticulum membrane. It localises to the golgi apparatus membrane. It carries out the reaction a 1,2-diacyl-sn-glycero-3-phospho-(1D-myo-inositol-3-phosphate) + H2O = a 1,2-diacyl-sn-glycero-3-phospho-(1D-myo-inositol) + phosphate. It catalyses the reaction a 1,2-diacyl-sn-glycero-3-phospho-(1D-myo-inositol 4-phosphate) + H2O = a 1,2-diacyl-sn-glycero-3-phospho-(1D-myo-inositol) + phosphate. Phosphoinositide phosphatase which catalyzes the hydrolysis of phosphatidylinositol 3-phosphate (PtdIns(3)P) and phosphatidylinositol 4-phosphate (PtdIns(4)P). Has low activity towards phosphatidylinositol-3,5-bisphosphate (PtdIns(3,5)P2). May be involved in the coordination of the activities of the secretory pathway and the actin cytoskeleton. This chain is Phosphatidylinositol-3-phosphatase SAC1 (SAC1), found in Saccharomyces cerevisiae (strain ATCC 204508 / S288c) (Baker's yeast).